The primary structure comprises 187 residues: Elongation factor P 2 (187 aa).

It belongs to the elongation factor P family.

Its subcellular location is the cytoplasm. It functions in the pathway protein biosynthesis; polypeptide chain elongation. Functionally, involved in peptide bond synthesis. Stimulates efficient translation and peptide-bond synthesis on native or reconstituted 70S ribosomes in vitro. Probably functions indirectly by altering the affinity of the ribosome for aminoacyl-tRNA, thus increasing their reactivity as acceptors for peptidyl transferase. This is Elongation factor P 2 from Geobacter sulfurreducens (strain ATCC 51573 / DSM 12127 / PCA).